We begin with the raw amino-acid sequence, 4022 residues long: Intermembrane lipid transfer protein VPS13B (4022 aa).

Positions 2-102 (LESYVTPILM…KDGIQDDHES (101 aa)) constitute a Chorein N-terminal domain. Residues 100–134 (HESCGSNSTNRSTAESTKSSIKPRRMQQAAPTDPD) are disordered. A compositionally biased stretch (polar residues) spans 103–119 (CGSNSTNRSTAESTKSS). Ser414, Ser999, Ser1002, and Ser1033 each carry phosphoserine. The interval 1247 to 1314 (NLSPTSPETM…SVTLEQTTSN (68 aa)) is disordered. Composition is skewed to polar residues over residues 1264 to 1292 (PVRS…TEGD) and 1302 to 1314 (FSDS…TTSN). At Ser1815 the chain carries Phosphoserine. The segment covering 1860–1872 (KSQEQKNNEKTDK) has biased composition (basic and acidic residues). Residues 1860 to 1880 (KSQEQKNNEKTDKSSLNLPEV) form a disordered region. The region spanning 2631–2716 (HFVICNDTQE…RTASLIIKVQ (86 aa)) is the SHR-BD domain. Positions 3908-4022 (AFPVTEIDCA…KNKALRKGFP (115 aa)) are localizes the protein to the Golgi apparatus.

The protein belongs to the VPS13 family. As to quaternary structure, interacts with STX6. Interacts with STX12. Interacts with RAB6A isoform 1 (GTP-bound) and isoform 2 (GTP-bound). Interacts with RAB6B (GTP-bound). Widely expressed. There is apparent differential expression of different transcripts. In fetal brain, lung, liver, and kidney, two transcripts of 2 and 5 kb are identified. These transcripts are also seen in all adult tissues analyzed. A larger transcript (12-14 kb) is expressed in prostate, testis, ovary, and colon in the adult. Expression is very low in adult brain tissue. Expressed in peripheral blood lymphocytes. Isoform 1 and isoform 2 are expressed in brain and retina. Isoform 2 is expressed ubiquitously.

It is found in the recycling endosome membrane. It localises to the cytoplasmic vesicle. The protein resides in the secretory vesicle. The protein localises to the acrosome membrane. Its subcellular location is the golgi apparatus. It is found in the cis-Golgi network membrane. It localises to the endoplasmic reticulum-Golgi intermediate compartment membrane. The protein resides in the trans-Golgi network membrane. The protein localises to the early endosome membrane. Its subcellular location is the lysosome membrane. Functionally, mediates the transfer of lipids between membranes at organelle contact sites. Binds phosphatidylinositol 3-phosphate. Functions as a tethering factor in the slow endocytic recycling pathway, to assist traffic between early and recycling endosomes. Involved in the transport of proacrosomal vesicles to the nuclear dense lamina (NDL) during spermatid development. Plays a role in the assembly of the Golgi apparatus, possibly by mediating trafficking to the Golgi membrane. Plays a role in the development of the nervous system, and may be required for neuron projection development. May also play a role during adipose tissue development. Required for maintenance of the ocular lens. The protein is Intermembrane lipid transfer protein VPS13B (VPS13B) of Homo sapiens (Human).